A 1523-amino-acid chain; its full sequence is TALPID3 protein (1523 aa).

Positions methionine 1–serine 16 are enriched in polar residues. 2 disordered regions span residues methionine 1–glycine 20 and serine 57–glycine 84. Coiled coils occupy residues isoleucine 428–leucine 466 and isoleucine 499–lysine 528. A required for centrosomal localization region spans residues serine 498–valine 585. 5 disordered regions span residues glutamate 1070–aspartate 1112, valine 1137–glutamate 1262, alanine 1294–lysine 1313, aspartate 1373–threonine 1410, and serine 1498–phenylalanine 1523. Over residues valine 1073–proline 1088 the composition is skewed to pro residues. Over residues threonine 1099–glutamate 1108 the composition is skewed to polar residues. Composition is skewed to low complexity over residues valine 1137 to threonine 1149 and serine 1236 to threonine 1251. The segment covering aspartate 1373 to proline 1386 has biased composition (basic and acidic residues). The segment covering serine 1507–phenylalanine 1523 has biased composition (low complexity).

Belongs to the TALPID3 family. Ubiquitously expressed.

The protein localises to the cytoplasm. Its subcellular location is the cytoskeleton. The protein resides in the microtubule organizing center. It is found in the centrosome. Its function is as follows. Required for ciliogenesis and sonic hedgehog/SHH signaling. Independently, involved in regulation of cell intracellular organization. Involved in regulation of cell polarity. The chain is TALPID3 protein (TALPID3) from Gallus gallus (Chicken).